Consider the following 225-residue polypeptide: Ribonuclease 3 (225 aa).

The 123-residue stretch at 5 to 127 folds into the RNase III domain; the sequence is LERLQRQIGY…IIGAISLDSD (123 aa). Residue Glu-40 participates in Mg(2+) binding. Asp-44 is a catalytic residue. Residues Asp-113 and Glu-116 each contribute to the Mg(2+) site. Residue Glu-116 is part of the active site. The DRBM domain maps to 154–224; sequence DPKTRLQEYL…AEKILQLLEM (71 aa).

It belongs to the ribonuclease III family. As to quaternary structure, homodimer. Requires Mg(2+) as cofactor.

It is found in the cytoplasm. It carries out the reaction Endonucleolytic cleavage to 5'-phosphomonoester.. Its function is as follows. Digests double-stranded RNA. Involved in the processing of primary rRNA transcript to yield the immediate precursors to the large and small rRNAs (23S and 16S). Also processes some mRNAs, and tRNAs when they are encoded in the rRNA operon. In terms of biological role, CRISPR (clustered regularly interspaced short palindromic repeat) is an adaptive immune system that provides protection against mobile genetic elements (viruses, transposable elements and conjugative plasmids). CRISPR clusters contain spacers, sequences complementary to antecedent mobile elements, and target invading nucleic acids. CRISPR clusters are transcribed and processed into CRISPR RNA (crRNA). In this organism endogenous ribonuclease 3 and Cas9 are required for correct coprocessing of pre-crRNA and the trans-encoded small RNA (tracrRNA). Cas9, crRNA and tracrRNA are required for cleavage of invading DNA. Complements pre-crRNA and tracrRNA coprocessing defects in an rnc deletion in S.pyogenes strain 370. The sequence is that of Ribonuclease 3 from Pasteurella multocida (strain Pm70).